Here is a 121-residue protein sequence, read N- to C-terminus: Large ribosomal subunit protein uL18 (121 aa).

Belongs to the universal ribosomal protein uL18 family. Part of the 50S ribosomal subunit; part of the 5S rRNA/L5/L18/L25 subcomplex. Contacts the 5S and 23S rRNAs.

Its function is as follows. This is one of the proteins that bind and probably mediate the attachment of the 5S RNA into the large ribosomal subunit, where it forms part of the central protuberance. The polypeptide is Large ribosomal subunit protein uL18 (Buchnera aphidicola subsp. Baizongia pistaciae (strain Bp)).